The chain runs to 177 residues: MAELTTIARPYAKAAFDFAIEHNAVDNWAEMLTFAALVSENETMQPLLNGALANTKLAALFINVCGEQINKQGQNLIKVMAENGRLSVLPTVSKLFSDFRNEWAKEVEANVVSATELSLEQQQHISVSLEKRLARKVKLNCSTDTALIAGAIIQVGDLVIDGSVRGKLSRLSDTLQS.

Belongs to the ATPase delta chain family. In terms of assembly, F-type ATPases have 2 components, F(1) - the catalytic core - and F(0) - the membrane proton channel. F(1) has five subunits: alpha(3), beta(3), gamma(1), delta(1), epsilon(1). F(0) has three main subunits: a(1), b(2) and c(10-14). The alpha and beta chains form an alternating ring which encloses part of the gamma chain. F(1) is attached to F(0) by a central stalk formed by the gamma and epsilon chains, while a peripheral stalk is formed by the delta and b chains.

It localises to the cell inner membrane. Its function is as follows. F(1)F(0) ATP synthase produces ATP from ADP in the presence of a proton or sodium gradient. F-type ATPases consist of two structural domains, F(1) containing the extramembraneous catalytic core and F(0) containing the membrane proton channel, linked together by a central stalk and a peripheral stalk. During catalysis, ATP synthesis in the catalytic domain of F(1) is coupled via a rotary mechanism of the central stalk subunits to proton translocation. In terms of biological role, this protein is part of the stalk that links CF(0) to CF(1). It either transmits conformational changes from CF(0) to CF(1) or is implicated in proton conduction. This is ATP synthase subunit delta from Shewanella putrefaciens (strain CN-32 / ATCC BAA-453).